We begin with the raw amino-acid sequence, 64 residues long: uncharacterized protein (64 aa).

2 helical membrane-spanning segments follow: residues 4–24 and 35–55; these read IYQY…WLAY and MYLN…TFGM.

The protein resides in the cell membrane. This is an uncharacterized protein from Bacillus subtilis (strain 168).